Here is a 198-residue protein sequence, read N- to C-terminus: MHEIYLIGLGNPGKKYYNSRHNIGFLLLEKLSKKYNSNFLLKDKLKSSCSEFQINNYTFRLFLPNTFMNNSGYAVRAIVDWYKVNLDQIFIIVDDKDLPLGKIRFRRKGSSGGHNGLKSIIEQLQSQNFKRIRIGIGSPPLIKGENNFNTISHVLGNISLEEKLILDKVFKRVIESLEHLNTKKEDHIINELNSFNQD.

Residue Y16 participates in tRNA binding. H21 (proton acceptor) is an active-site residue. Residues F67, N69, and N115 each coordinate tRNA.

This sequence belongs to the PTH family. As to quaternary structure, monomer.

It localises to the cytoplasm. It catalyses the reaction an N-acyl-L-alpha-aminoacyl-tRNA + H2O = an N-acyl-L-amino acid + a tRNA + H(+). Hydrolyzes ribosome-free peptidyl-tRNAs (with 1 or more amino acids incorporated), which drop off the ribosome during protein synthesis, or as a result of ribosome stalling. Functionally, catalyzes the release of premature peptidyl moieties from peptidyl-tRNA molecules trapped in stalled 50S ribosomal subunits, and thus maintains levels of free tRNAs and 50S ribosomes. This chain is Peptidyl-tRNA hydrolase, found in Prochlorococcus marinus (strain MIT 9301).